The following is a 416-amino-acid chain: Homogentisate 1,2-dioxygenase (416 aa).

The active-site Proton acceptor is the His275. Residues His318 and Glu324 each contribute to the Fe cation site. 2 residues coordinate homogentisate: Tyr333 and His354. Fe cation is bound at residue His354.

It belongs to the homogentisate dioxygenase family. In terms of assembly, hexamer; dimer of trimers. Fe cation serves as cofactor.

The enzyme catalyses homogentisate + O2 = 4-maleylacetoacetate + H(+). The protein operates within amino-acid degradation; L-phenylalanine degradation; acetoacetate and fumarate from L-phenylalanine: step 4/6. In terms of biological role, involved in the catabolism of homogentisate (2,5-dihydroxyphenylacetate or 2,5-OH-PhAc), a central intermediate in the degradation of phenylalanine and tyrosine. Catalyzes the oxidative ring cleavage of the aromatic ring of homogentisate to yield maleylacetoacetate. This is Homogentisate 1,2-dioxygenase from Legionella pneumophila (strain Corby).